We begin with the raw amino-acid sequence, 117 residues long: UPF0251 protein DehaBAV1_0135 (117 aa).

The protein belongs to the UPF0251 family.

The protein is UPF0251 protein DehaBAV1_0135 of Dehalococcoides mccartyi (strain ATCC BAA-2100 / JCM 16839 / KCTC 5957 / BAV1).